Reading from the N-terminus, the 1079-residue chain is Extracellular calcium-sensing receptor (1079 aa).

A signal peptide spans 1–19 (MAFSSCCWILLALTWCTSA). Topologically, residues 20–610 (YGPDQRAQKK…KEIEFLSWTE (591 aa)) are extracellular. The ligand-binding 1 (LB1) stretch occupies residues 22–188 (PDQRAQKKGD…QFKSFLRTIP (167 aa)). A disulfide bridge links Cys60 with Cys101. Residue 66 to 70 (RGFRW) participates in phosphate binding. Ca(2+) is bound by residues Ile81, Ser84, Leu87, and Leu88. Residue Asn90 is glycosylated (N-linked (GlcNAc...) asparagine). A Ca(2+)-binding site is contributed by Thr100. Asn130 carries an N-linked (GlcNAc...) asparagine glycan. Ca(2+) is bound at residue Thr145. Residues Ser147, Ala168, and Ser170 each coordinate L-tryptophan. Ca(2+) contacts are provided by Ser170, Pro188, Asp190, Glu231, and Asp234. The segment at 189-324 (NDEHQATAMA…GGTIGFALKA (136 aa)) is ligand-binding 2 (LB2). 7 cysteine pairs are disulfide-bonded: Cys236–Cys561, Cys358–Cys395, Cys437–Cys449, Cys542–Cys562, Cys546–Cys565, Cys568–Cys582, and Cys585–Cys598. The spermine site is built by Asp238 and Ser240. N-linked (GlcNAc...) asparagine glycosylation is found at Asn261 and Asn287. Glu297 is a Ca(2+) binding site. Glu297 is a binding site for L-tryptophan. N-linked (GlcNAc...) asparagine glycans are attached at residues Asn386 and Asn400. 415–417 (RIS) contributes to the phosphate binding site. N-linked (GlcNAc...) asparagine glycosylation is found at Asn446, Asn468, and Asn488. Tyr489 lines the Ca(2+) pocket. N-linked (GlcNAc...) asparagine glycosylation is present at Asn541. The cysteine-rich (CR) stretch occupies residues 542-612 (CSRDCLAGTR…IEFLSWTEPF (71 aa)). Residue Gly557 coordinates Ca(2+). A glycan (N-linked (GlcNAc...) asparagine) is linked at Asn594. The chain crosses the membrane as a helical span at residues 611–636 (PFGIALTLFAVLGIFLTAFVLGVFIK). Residues 637–648 (FRNTPIVKATNR) are Cytoplasmic-facing. The segment at 637–648 (FRNTPIVKATNR) is intracellular loop 1 (ICL1). Residues 649-668 (ELSYLLLFSLLCCFSSSLFF) form a helical membrane-spanning segment. Residues 669–674 (IGEPQD) lie on the Extracellular side of the membrane. A helical transmembrane segment spans residues 675–698 (WTCRLRQPAFGISFVLCISCILVK). At 699-722 (TNRVLLVFEAKIPTSFHRKWWGLN) the chain is on the cytoplasmic side. Residues 699–722 (TNRVLLVFEAKIPTSFHRKWWGLN) form an intracellular loop 2 (ICL2) region. A helical transmembrane segment spans residues 723-745 (LQFLLVFLCTFMQIVICAIWLYT). The Extracellular segment spans residues 746–769 (APPSSYRNHELEDEIIFITCHEGS). A helical membrane pass occupies residues 770–789 (LMALGFLIGYTCLLAAICFF). At 790-805 (FAFKSRKLPENFNEAK) the chain is on the cytoplasmic side. Residues 790–805 (FAFKSRKLPENFNEAK) are intracellular loop 3 (ICL3). A helical transmembrane segment spans residues 806-828 (FITFSMLIFFIVWISFIPAYAST). Topologically, residues 829–832 (YGKF) are extracellular. The helical transmembrane segment at 833–854 (VSAVEVIAILAASFGLLACIFF) threads the bilayer. Residues 855 to 1079 (NKVYIILFKP…STVTENMLHS (225 aa)) are Cytoplasmic-facing. The segment at 855 to 1079 (NKVYIILFKP…STVTENMLHS (225 aa)) is C-terminus. The segment at 880-900 (AFKVAARATLRRSNVSRQRSS) is interaction with RNF19A. Thr888 carries the post-translational modification Phosphothreonine. Residues 890-898 (RRSNVSRQR) are arginine-rich retention motif. 3 positions are modified to phosphoserine: Ser892, Ser899, and Ser920. The segment covering 892–918 (SNVSRQRSSSLGGSTGSTPSSSISSKS) has biased composition (low complexity). The disordered stretch occupies residues 892–963 (SNVSRQRSSS…QPQLQQQPRC (72 aa)). Positions 945–954 (PQAPSTPQPQ) are enriched in pro residues. Residue Ser1062 is modified to Phosphoserine.

It belongs to the G-protein coupled receptor 3 family. In terms of assembly, homodimer; disulfide-linked. Interacts with VCP. Interacts with ARRB1. Post-translationally, phosphorylation at Thr-888 by PKC impairs coupling with G(q)/G(11) G-proteins, while it does not affect G(i)/G(o)-coupling. Phosphorylation at Ser-892 by PKC and Ser-899 by PKA promote plasma membrane localization. Ubiquitinated by RNF19A; which induces proteasomal degradation.

It localises to the cell membrane. Its activity is regulated as follows. In resting state, adopts an open conformation, anion-binding promoting the inactive configuration. Upon aromatic amino acid-binding, the groove in the extracellular venus flytrap module is closed, thereby inducing the formation of a novel homodimer interface between subunits. Calcium ions stabilize the active state by enhancing homodimer interactions between membrane-proximal domains to fully activate the receptor. Upon activation, the homodimer adopts an asymmetric configuration of the 7-transmembrane region that primes one protomer for G-protein coupling. G-protein binding expands the transmembrane dimer interface; the restriction imposed by the receptor dimer, in combination with intracellular loop 2 (ICL2), enables G-protein activation by facilitating conformational transition of G-protein alpha. Coupling to different classes of G-proteins results in distinct CASR-G-protein interfaces. In contrast to human protein, not activated by AMG 416, a D-amino acid-containing peptide agonist: this is probably due to the absence of a Cys residue at position 482, which forms a disulfide bond with the AMG 416 peptide agonist in human and that is replaced by a Tyr residue in pig. In terms of biological role, G-protein-coupled receptor that senses changes in the extracellular concentration of calcium ions and plays a key role in maintaining calcium homeostasis. Senses fluctuations in the circulating calcium concentration: activated by elevated circulating calcium, leading to decreased parathyroid hormone (PTH) secretion in parathyroid glands. In kidneys, acts as a key regulator of renal tubular calcium resorption. Ligand binding causes a conformation change that triggers signaling via guanine nucleotide-binding proteins (G-proteins) and modulates the activity of downstream effectors. CASR is coupled with different G(q)/G(11), G(i)/G(o)- or G(s)-classes of G-proteins depending on the context. In the parathyroid and kidney, CASR signals through G(q)/G(11) and G(i)/G(o) G-proteins: G(q)/G(11) coupling activates phospholipase C-beta, releasing diacylglycerol (DAG) and inositol 1,4,5-trisphosphate (IP3) second messengers, while G(i)/G(o) coupling mediates inhibition of adenylate cyclase activity. The G-protein-coupled receptor activity is activated by a co-agonist mechanism: aromatic amino acids, such as Trp or Phe, act concertedly with divalent cations, such as calcium or magnesium, to achieve full receptor activation. Acts as an activator of the NLRP3 inflammasome via G(i)/G(o)-mediated signaling: down-regulation of cyclic AMP (cAMP) relieving NLRP3 inhibition by cAMP. Acts as a regulator of proton-sensing receptor GPR68 in a seesaw manner: CASR-mediated signaling inhibits GPR68 signaling in response to extracellular calcium, while GPR68 inhibits CASR in presence of extracellular protons. This chain is Extracellular calcium-sensing receptor (CASR), found in Sus scrofa (Pig).